We begin with the raw amino-acid sequence, 246 residues long: MSRGSGGGYDRHITIFSPEGRLFQVEYAFKAVKAAGITSIGVRGKDSVCVVTQKKVPDKLLDQTSVSHLFPITKYLGLLATGMTADARTLVQQARNEAAEFRFKYGYEMPVDVLSKWIADKSQVYTQHAYMRPLGVVAMILGIDEEKGPQLFKCDPAGHFFGHKATSAGSKEQEAINFLEKKMKNDPAFSYEETVQTAISALQSVLQEDFKASEIEVGVVKKEDPIFRVLTTEEIDEHLTAISERD.

The protein belongs to the peptidase T1A family. As to quaternary structure, the 26S proteasome consists of a 20S proteasome core and two 19S regulatory subunits. The 20S proteasome core is composed of 28 subunits that are arranged in four stacked rings, resulting in a barrel-shaped structure. The two end rings are each formed by seven alpha subunits, and the two central rings are each formed by seven beta subunits. The catalytic chamber with the active sites is on the inside of the barrel.

It is found in the cytoplasm. Its subcellular location is the nucleus. In terms of biological role, the proteasome is a multicatalytic proteinase complex which is characterized by its ability to cleave peptides with Arg, Phe, Tyr, Leu, and Glu adjacent to the leaving group at neutral or slightly basic pH. The proteasome has an ATP-dependent proteolytic activity. This chain is Proteasome subunit alpha type-6 (PAA1), found in Nicotiana tabacum (Common tobacco).